A 392-amino-acid polypeptide reads, in one-letter code: [Phe13]-bombesin receptor (392 aa).

Residues 1-40 are Extracellular-facing; it reads MPEGFQSLNQTLPSAISSIAHLESLNDSFILGAKQSEDVS. Residues asparagine 9 and asparagine 26 are each glycosylated (N-linked (GlcNAc...) asparagine). A helical transmembrane segment spans residues 41-62; the sequence is PGLEILALISVTYAVIISVGIL. Residues 63–81 lie on the Cytoplasmic side of the membrane; the sequence is GNTILIKVFFKIKSMQTVP. The chain crosses the membrane as a helical span at residues 82–102; the sequence is NIFITSLAFGDLLLLLTCVPV. Topologically, residues 103 to 120 are extracellular; sequence DASRYIVDTWMFGRAGCK. A disulfide bridge connects residues cysteine 119 and cysteine 202. A helical membrane pass occupies residues 121-142; sequence IISFIQLTSVGVSVFTLTVLSA. The Cytoplasmic portion of the chain corresponds to 143–162; it reads DRYRAIVKPLQLQTSDAVLK. Residues 163-183 traverse the membrane as a helical segment; the sequence is TCGKAVCVWIISMLLAAPEAV. Residues 184 to 219 lie on the Extracellular side of the membrane; sequence FSDLYEFGSSEKNTTFEACAPYPVSEKILQETHSLI. The helical transmembrane segment at 220–240 threads the bilayer; sequence CFLVFYIVPLSIISAYYFLIA. Residues 241-271 lie on the Cytoplasmic side of the membrane; sequence KTLYKSTFNMPAEEHTHARKQIESRKRVAKT. The chain crosses the membrane as a helical span at residues 272–292; it reads VLVLVALFAVCWLPNHMLYLY. The Extracellular portion of the chain corresponds to 293-312; that stretch reads RSFTYHSAVNSSAFHLSATI. A helical transmembrane segment spans residues 313–332; that stretch reads FARVLAFSNSCVNPFALYWL. The Cytoplasmic portion of the chain corresponds to 333–392; the sequence is SRSFRQHFKKQVYCCKTEPPASQQSPTHSSTITGITAVKGNIQMSEISITLLSAYDVKKE. Residue cysteine 346 is the site of S-palmitoyl cysteine attachment.

The protein belongs to the G-protein coupled receptor 1 family. As to expression, expressed only in brain, primarily in cortex and forebrain and at low levels in the midbrain.

It localises to the cell membrane. Its function is as follows. The relative rank potency of bombesin-like peptides for this receptor is [Phe13]bombesin &gt; [Leu13]bombesin &gt; GRP &gt; neuromedin-B. The chain is [Phe13]-bombesin receptor (BB4) from Bombina orientalis (Oriental fire-bellied toad).